The primary structure comprises 1507 residues: MKKLVPIEIGEEKRPKDIKAIQFRLASPEKILSWSHGEVKKPETINYRTLKPERDGLFCAKIFGPIKDYECLCGKYKKMRYKGVVCEKCGVEVTTSKVRRSRMGHIELVTPVAHIWYVNSLPSRIGTLLGVKMKDLERVLYYEAYIVKNPGEAYYDFEKKNPVKKYDVLNEEQYQQLVQHFGDTGFDARMGGEVVKELLEEFDLVEAFEQLREEMKNTNSEAKRKTIVKRLKVIESFLNSGNRPEWMMLTVVPVLPPDLRPLVALDGGKFAVSDVNDLYRRVINRNQRLKRLLELDAPEIIVRNEKRMLQEAVDALIDNGRRGNAVKGANKRPLKSLSEIIKGKQGRFRQNLLGKRVDFSGRSVIVVGPNLRMDQCGLPKLMALELFKPHLLAKLEEKGYATTLKQAKKMIEDRENVVWECLQEIVDEYPVLLNRAPTLHKLSIQAFHPVLIDGKAIQLHPLVCSAFNADFDGDQMAVHVPLTEEAIAECKILMLSSMNILLPASGRAIAVPTQDMVLGIYYLSKEKEDAKGTHKLFADINEVMTALESDYLDLNAKIRTKIDNQVIYTTAGRLIIKSILPDFVPVNLWNKVLKKKDIANLVDYVFKEGGPKITAEFLDNLKELGFKYSTVTGISISAYDIKVPDSKKRLIEEAKRKVKEIQQQFQAGLLTEQERYNKIIDIWTDTSNEVAKEMMELMKNDKDGFNSVYMMADSGARGSSAQIRQLAGMRGLMAKPDGTIIETPIISNFKEGLNVLEYFISTHGARKGLADTALKTANAGYLTRKLVDVAQNVKITMDDCGTHEGVEITDISVGNELIEPLEDRIFGRVLAQDIMDPITNEILFSEGTLLDEEKTRKIIEAGIKSVTIRTPITCKAEKGVCAKCYGLNMAEGKLVKPGEAVGIIAAQSIGEPGTQLTLRTFHVGGTASRSAEERQVVATKEGFIRYYNLKTYETEDGKIIVANRRNAAVLLVEPKIKALFNGEIEVKPIHDEVLITLSNGEEKVRYSFKKSDFARPNELAGVSGKIEGKLYLPYESGTKVEAGESIVEIIKEGWNIPNRIPYAAILKVKDGAPVTQKIVSGAKGVVKYYKLKGDYLERFEGVKEGEKIEEKGLFAVIADEEGREAARHYIARGSIIEVADDQSVDKDTVIAMPAKSDKTVIAEWDPYSIPIIAEKEGVITFEDIIPGVTAVEQVDEFTGETRLTINEYIPAEYKPAIVLAPKDGSEIIRYVLDPKTAIYVQNGQEVKLAQTLAKTPKAAAKSKDITGGLPRVSELFEARRPKDPAVVAEIDGVVSFGKPSRGKQRIIITADTGQTVEYLIDKNRQILVHNGEFVHAGERLTDGTVSGHDILRTLGEKALMYYMVSEIQQVYRRQGVNISDKHIEIIVSQMLRQVKIVDSGDTKFIPGDLVSKKEFRKENEKILRLGGQPAIAEPILIGITRAAVSSDSVISAASFQDTTKVLTEASVSAKVDHLEDLKENVIIGRLIPVGTGLYKDRKVKVETASQE.

Zn(2+)-binding residues include Cys71, Cys73, Cys86, and Cys89. Mg(2+) is bound by residues Asp470, Asp472, and Asp474. Cys800, Cys874, Cys881, and Cys884 together coordinate Zn(2+).

It belongs to the RNA polymerase beta' chain family. The RNAP catalytic core consists of 2 alpha, 1 beta, 1 beta' and 1 omega subunit. When a sigma factor is associated with the core the holoenzyme is formed, which can initiate transcription. Mg(2+) serves as cofactor. Requires Zn(2+) as cofactor.

It catalyses the reaction RNA(n) + a ribonucleoside 5'-triphosphate = RNA(n+1) + diphosphate. Its function is as follows. DNA-dependent RNA polymerase catalyzes the transcription of DNA into RNA using the four ribonucleoside triphosphates as substrates. The chain is DNA-directed RNA polymerase subunit beta' from Nitratiruptor sp. (strain SB155-2).